The chain runs to 398 residues: MAVADWEEARGRMLLDPTVVNLNTGSGGPLPRSAFERVTGFRAHLAAEPMDFLLREVPALLWQARESLARLIGGDPLRLALATNVTAAVNLVASSLRLEAPGEILLSDDEYTPMRWCWERVARRHGLELRTFRLPELPSDPAEITAAAVAAMGPRTRLFFFSHVVSTTGLILPAAELCEEARARGITTVVDGAHAPGFLDLDLSRIPCDFYAGSGHKWLLAPTGVGFLHLAPGRLEELEPTQVSWAYEPPEGSGPPAARDRFGSTPGLRRLECEGTRDICPWLATPESIDFQAELGPGAIRARRRELTDHARRLLADRPGRTLLTPDSPELSGGMVAYRLPPGTDAAELRRGLWERFRIEAAVAEQPPGPVLRISANFYTTEEEIDRLADALDALTGE.

Lysine 217 carries the N6-(pyridoxal phosphate)lysine modification.

This sequence belongs to the class-V pyridoxal-phosphate-dependent aminotransferase family. Pyridoxal 5'-phosphate serves as cofactor.

The enzyme catalyses isopenicillin N = penicillin N. It participates in antibiotic biosynthesis; cephalosporin C biosynthesis. Functionally, catalyzes the reversible isomerization between isopenicillin N and penicillin N. This Streptomyces clavuligerus protein is Isopenicillin N epimerase (cefD).